A 376-amino-acid chain; its full sequence is Fibromodulin (376 aa).

Residues 1 to 18 (MQWTSLLLLAGLFSLSQA) form the signal peptide. The residue at position 19 (Gln19) is a Pyrrolidone carboxylic acid. A sulfotyrosine mark is found at Tyr20, Tyr38, Tyr39, Tyr45, Tyr47, Tyr53, and Tyr55. The LRRNT domain occupies 67 to 105 (SPSPPDPRDCPQECDCPPNFPTAMYCDNRNLKYLPFVPS). LRR repeat units lie at residues 106–127 (RMKY…VFDN), 130–151 (GLLW…RKVF), 156–176 (HLER…PLPR), 177–198 (SLRE…ALEG), 201–222 (NLTA…MRGL), 224–245 (SLIL…LPSA), 246–266 (LEQL…YFRG), and 269–289 (KLLY…ASNT). Asn127 carries an N-linked (GlcNAc...) (keratan sulfate) asparagine glycan. Asn166 carries an N-linked (GlcNAc...) (keratan sulfate) asparagine glycan. Asn201 carries N-linked (GlcNAc...) (keratan sulfate) asparagine glycosylation. Residue Asn291 is glycosylated (N-linked (GlcNAc...) (keratan sulfate) asparagine). 2 LRR repeats span residues 294-315 (SLLE…NTNL) and 316-335 (ENLY…SFCT). An intrachain disulfide couples Cys334 to Cys367. An N-linked (GlcNAc...) asparagine glycan is attached at Asn341. The LRR 11 repeat unit spans residues 344 to 365 (KLQVLRLDGNEIKRSAMPADAP).

This sequence belongs to the small leucine-rich proteoglycan (SLRP) family. SLRP class II subfamily. Binds to type I and type II collagen. In terms of processing, binds keratan sulfate chains.

The protein resides in the secreted. Its subcellular location is the extracellular space. The protein localises to the extracellular matrix. Affects the rate of fibrils formation. May have a primary role in collagen fibrillogenesis. This Homo sapiens (Human) protein is Fibromodulin (FMOD).